We begin with the raw amino-acid sequence, 287 residues long: Energy-coupling factor transporter ATP-binding protein EcfA1 (287 aa).

The ABC transporter domain maps to 6-248; sequence IVAEGVSYAY…ADRIRALRLD (243 aa). 47 to 54 serves as a coordination point for ATP; sequence GMNGSGKS.

This sequence belongs to the ABC transporter superfamily. Energy-coupling factor EcfA family. Forms a stable energy-coupling factor (ECF) transporter complex composed of 2 membrane-embedded substrate-binding proteins (S component), 2 ATP-binding proteins (A component) and 2 transmembrane proteins (T component).

It is found in the cell membrane. Functionally, ATP-binding (A) component of a common energy-coupling factor (ECF) ABC-transporter complex. Unlike classic ABC transporters this ECF transporter provides the energy necessary to transport a number of different substrates. In Symbiobacterium thermophilum (strain DSM 24528 / JCM 14929 / IAM 14863 / T), this protein is Energy-coupling factor transporter ATP-binding protein EcfA1.